The primary structure comprises 240 residues: UDP-2,3-diacylglucosamine hydrolase (240 aa).

Mn(2+) is bound by residues D8, H10, D41, N79, and H114. Residue 79–80 coordinates substrate; the sequence is NR. Positions 122, 160, 164, 167, and 195 each coordinate substrate. Mn(2+)-binding residues include H195 and H197.

The protein belongs to the LpxH family. The cofactor is Mn(2+).

It is found in the cell inner membrane. It catalyses the reaction UDP-2-N,3-O-bis[(3R)-3-hydroxytetradecanoyl]-alpha-D-glucosamine + H2O = 2-N,3-O-bis[(3R)-3-hydroxytetradecanoyl]-alpha-D-glucosaminyl 1-phosphate + UMP + 2 H(+). It functions in the pathway glycolipid biosynthesis; lipid IV(A) biosynthesis; lipid IV(A) from (3R)-3-hydroxytetradecanoyl-[acyl-carrier-protein] and UDP-N-acetyl-alpha-D-glucosamine: step 4/6. Hydrolyzes the pyrophosphate bond of UDP-2,3-diacylglucosamine to yield 2,3-diacylglucosamine 1-phosphate (lipid X) and UMP by catalyzing the attack of water at the alpha-P atom. Involved in the biosynthesis of lipid A, a phosphorylated glycolipid that anchors the lipopolysaccharide to the outer membrane of the cell. The sequence is that of UDP-2,3-diacylglucosamine hydrolase from Escherichia coli O6:H1 (strain CFT073 / ATCC 700928 / UPEC).